The chain runs to 88 residues: MSQGDIIHFTSQALWLVLVLSMPPVLVAAVVGTLVSLVQALTQIQEQTLGFVIKLIAVVVTLFATASWLGNELHSFAEMTMMKIQGIR.

Helical transmembrane passes span 15–35 and 49–69; these read WLVL…GTLV and LGFV…ASWL.

The protein belongs to the FliQ/MopD/SpaQ family.

Its subcellular location is the cell membrane. Its function is as follows. Component of the Yop secretion machinery. This Yersinia pestis protein is Yop proteins translocation protein S (yscS).